We begin with the raw amino-acid sequence, 164 residues long: Transcriptional regulator MraZ (164 aa).

SpoVT-AbrB domains lie at 7-60 (HFTN…EIDE) and 83-126 (SEIL…EPGR). The disordered stretch occupies residues 141–164 (LRKQLSSRPVAPDAQPPRPHGARE). Positions 154–164 (AQPPRPHGARE) are enriched in pro residues.

Belongs to the MraZ family. As to quaternary structure, forms oligomers.

The protein localises to the cytoplasm. It localises to the nucleoid. The sequence is that of Transcriptional regulator MraZ from Beijerinckia indica subsp. indica (strain ATCC 9039 / DSM 1715 / NCIMB 8712).